Here is a 450-residue protein sequence, read N- to C-terminus: tRNA modification GTPase MnmE (450 aa).

3 residues coordinate (6S)-5-formyl-5,6,7,8-tetrahydrofolate: K21, E78, and K117. The TrmE-type G domain maps to 213–376 (GHALSIIGKP…LSQKISAFFP (164 aa)). N223 provides a ligand contact to K(+). GTP is bound by residues 223–228 (NAGKSS), 242–248 (SDIKGTT), and 267–270 (DTAG). S227 contacts Mg(2+). Residues S242, I244, and T247 each contribute to the K(+) site. T248 provides a ligand contact to Mg(2+). A (6S)-5-formyl-5,6,7,8-tetrahydrofolate-binding site is contributed by K450.

It belongs to the TRAFAC class TrmE-Era-EngA-EngB-Septin-like GTPase superfamily. TrmE GTPase family. As to quaternary structure, homodimer. Heterotetramer of two MnmE and two MnmG subunits. Requires K(+) as cofactor.

It localises to the cytoplasm. Functionally, exhibits a very high intrinsic GTPase hydrolysis rate. Involved in the addition of a carboxymethylaminomethyl (cmnm) group at the wobble position (U34) of certain tRNAs, forming tRNA-cmnm(5)s(2)U34. The chain is tRNA modification GTPase MnmE from Helicobacter acinonychis (strain Sheeba).